Here is a 153-residue protein sequence, read N- to C-terminus: Pro-corazonin (153 aa).

A signal peptide spans 1–20; sequence MLRLLLLPLFLFTLSMACMG. Gln-21 bears the Pyrrolidone carboxylic acid mark. The residue at position 31 (Asn-31) is an Asparagine amide. A propeptide spanning residues 64-153 is cleaved from the precursor; it reads LERCLLQLQH…AVEPNDYGKH (90 aa).

The protein belongs to the corazonin family. Expression is restricted to 24 neurons in the larval CNS (8 in the brain and 16 in the ventral nerve cord) and 12-16 neurons in the pars lateralis of the adult brain.

The protein localises to the secreted. Functionally, cardioactive peptide. Corazonin is probably involved in the physiological regulation of the heart beat. Clock (Clk) and cycle (cyc) proteins negatively regulate Crz transcription in a cell-specific manner. This Drosophila virilis (Fruit fly) protein is Pro-corazonin (Crz).